The primary structure comprises 371 residues: MGIIFYTTQMPNFEQNQVIAVGLSGGVDSSVAALVLKEKGYEVIGLFMQNWETDSKDPFCTAEQDLSDAKAIADHIGIPLYVVNFSKAYWNHVFQHCLDEFAQGRTPNPDVWCNREIKFKSLLDHAKKLGATHLATGHYACIQNENNEYRLLKSNDSHKDQSYFLHLLNQYQLANSVFPIGGYQKSEVRAIAKKRGFINHAKKDSTGICFIGERKFKDFLNEFLLAQPGNIETPEGKIIGKHDGIMFYTVGQRKGLHIGGRPDAGEAPWYVVDKDVKRNVLIVVQGYEHPLLYSQELTCTNLHWIRDTEPSFPLTCKAKTRCRQADQTCVITRLDNDHCHVQFEHPQRAITRGQSVVFYLGNECLGGGIIN.

Residues 22-29 (GLSGGVDS) and Met-48 contribute to the ATP site. Residues 108 to 110 (NPD) are interaction with target base in tRNA. The active-site Nucleophile is Cys-113. Residues Cys-113 and Cys-209 are joined by a disulfide bond. Residue Gly-137 coordinates ATP. The segment at 159-161 (KDQ) is interaction with tRNA. Cys-209 (cysteine persulfide intermediate) is an active-site residue.

The protein belongs to the MnmA/TRMU family.

Its subcellular location is the cytoplasm. It carries out the reaction S-sulfanyl-L-cysteinyl-[protein] + uridine(34) in tRNA + AH2 + ATP = 2-thiouridine(34) in tRNA + L-cysteinyl-[protein] + A + AMP + diphosphate + H(+). Catalyzes the 2-thiolation of uridine at the wobble position (U34) of tRNA, leading to the formation of s(2)U34. In Coxiella burnetii (strain CbuK_Q154) (Coxiella burnetii (strain Q154)), this protein is tRNA-specific 2-thiouridylase MnmA.